We begin with the raw amino-acid sequence, 149 residues long: Putative sugar phosphate isomerase YwlF (149 aa).

Histidine 9 serves as a coordination point for substrate. Catalysis depends on cysteine 66, which acts as the Proton acceptor. 67–72 (GTGIGM) lines the substrate pocket. The active-site Proton donor is the histidine 99. Arginine 133 is a substrate binding site.

This sequence belongs to the LacAB/RpiB family.

In Bacillus subtilis (strain 168), this protein is Putative sugar phosphate isomerase YwlF (ywlF).